A 628-amino-acid chain; its full sequence is Growth hormone receptor (628 aa).

Positions 1–18 (MDLWQLLLTLAVVGSSNA) are cleaved as a signal peptide. Over 19–266 (FVGREAVTVT…FTCEEEFQFP (248 aa)) the chain is Extracellular. Asn33, Asn40, and Asn46 each carry an N-linked (GlcNAc...) asparagine glycan. 2 cysteine pairs are disulfide-bonded: Cys56–Cys66 and Cys101–Cys112. Asn115 is a glycosylation site (N-linked (GlcNAc...) asparagine). Cys126 and Cys140 are oxidised to a cystine. The 104-residue stretch at 151–254 (PPTGLNWTLM…EILYITLPQS (104 aa)) folds into the Fibronectin type-III domain. N-linked (GlcNAc...) asparagine glycans are attached at residues Asn156, Asn161, and Asn200. The WSXWS motif motif lies at 240–244 (YGEFS). The helical transmembrane segment at 267-287 (WFLIMIFGIFGLTVMLLVVMF) threads the bilayer. Over 288 to 628 (SKQQRIKMLI…STDQLNKIML (341 aa)) the chain is Cytoplasmic. A required for JAK2 binding region spans residues 294–379 (KMLILPPVPV…HQKSLNILGA (86 aa)). A Box 1 motif motif is present at residues 297 to 305 (ILPPVPVPK). Positions 340 to 349 (DSWVEFIELD) match the UbE motif motif. A Phosphoserine modification is found at Ser341. 2 positions are modified to phosphotyrosine: Tyr483 and Tyr585.

This sequence belongs to the type I cytokine receptor family. Type 1 subfamily. In terms of assembly, on growth hormone (GH) binding, forms homodimers and binds JAK2 via a box 1-containing domain. The soluble form (GHBP) is produced by phorbol ester-promoted proteolytic cleavage at the cell surface (shedding) by ADAM17/TACE. Shedding is inhibited by growth hormone (GH) binding to the receptor probably due to a conformational change in GHR rendering the receptor inaccessible to ADAM17. In terms of processing, on GH binding, phosphorylated on tyrosine residues in the cytoplasmic domain by JAK2. Post-translationally, ubiquitinated by the ECS(SOCS2) complex following ligand-binding and phosphorylation by JAK2, leading to its degradation by the proteasome. Regulation by the ECS(SOCS2) complex acts as a negative feedback loop of growth hormone receptor signaling. Ubiquitination is not sufficient for GHR internalization.

The protein resides in the cell membrane. The protein localises to the secreted. In terms of biological role, receptor for pituitary gland growth hormone (GH1) involved in regulating postnatal body growth. On ligand binding, couples to the JAK2/STAT5 pathway. The soluble form (GHBP) acts as a reservoir of growth hormone in plasma and may be a modulator/inhibitor of GH signaling. In Cavia porcellus (Guinea pig), this protein is Growth hormone receptor (GHR).